Reading from the N-terminus, the 283-residue chain is uncharacterized protein (283 aa).

3 helical membrane-spanning segments follow: residues 18 to 38 (VYDI…AKLI), 61 to 81 (VIYF…LGLD), and 94 to 114 (IVLG…IFLI).

The protein belongs to the MscS (TC 1.A.23) family.

It localises to the cell membrane. This is an uncharacterized protein from Archaeoglobus fulgidus (strain ATCC 49558 / DSM 4304 / JCM 9628 / NBRC 100126 / VC-16).